A 319-amino-acid chain; its full sequence is Inactive hydroxysteroid dehydrogenase-like protein 1 (319 aa).

The tract at residues 2–82 (AAVDSFQLLY…CGASEAIAKA (81 aa)) is required for mitochondria translocation. NADP(+)-binding positions include 74 to 80 (GASEAIA), Lys99, and Asp125.

It belongs to the short-chain dehydrogenases/reductases (SDR) family. 17-beta-HSD 3 subfamily.

It localises to the mitochondrion. This chain is Inactive hydroxysteroid dehydrogenase-like protein 1 (hsdl1), found in Danio rerio (Zebrafish).